A 325-amino-acid chain; its full sequence is Tetraacyldisaccharide 4'-kinase (325 aa).

55–62 is a binding site for ATP; sequence TAGGNGKT.

It belongs to the LpxK family.

The enzyme catalyses a lipid A disaccharide + ATP = a lipid IVA + ADP + H(+). The protein operates within glycolipid biosynthesis; lipid IV(A) biosynthesis; lipid IV(A) from (3R)-3-hydroxytetradecanoyl-[acyl-carrier-protein] and UDP-N-acetyl-alpha-D-glucosamine: step 6/6. In terms of biological role, transfers the gamma-phosphate of ATP to the 4'-position of a tetraacyldisaccharide 1-phosphate intermediate (termed DS-1-P) to form tetraacyldisaccharide 1,4'-bis-phosphate (lipid IVA). This Enterobacter sp. (strain 638) protein is Tetraacyldisaccharide 4'-kinase.